The primary structure comprises 316 residues: UDP-N-acetylenolpyruvoylglucosamine reductase (316 aa).

The region spanning 30–194 is the FAD-binding PCMH-type domain; the sequence is VGGEADYLVF…LSVKFALAPG (165 aa). Arg173 is a catalytic residue. The active-site Proton donor is Ser223. The active site involves Glu293.

It belongs to the MurB family. Requires FAD as cofactor.

It is found in the cytoplasm. The catalysed reaction is UDP-N-acetyl-alpha-D-muramate + NADP(+) = UDP-N-acetyl-3-O-(1-carboxyvinyl)-alpha-D-glucosamine + NADPH + H(+). Its pathway is cell wall biogenesis; peptidoglycan biosynthesis. Functionally, cell wall formation. The sequence is that of UDP-N-acetylenolpyruvoylglucosamine reductase from Streptococcus pneumoniae serotype 2 (strain D39 / NCTC 7466).